A 694-amino-acid polypeptide reads, in one-letter code: Ubiquitin-like modifier-activating enzyme ATG7 (694 aa).

A GXGXXG motif motif is present at residues 370 to 375 (GAGTLG). Residue C550 is the Glycyl thioester intermediate of the active site. The segment at 650 to 689 (ALQEKEYVAELSGLAEVQRRAEEMAAHVDWEEDDDLVDDG) is homodimerization.

The protein belongs to the ATG7 family. Homodimer. Interacts with ATG8 through a thioester bond between Cys-550 and the C-terminal 'Gly-116' of ATG8 and with ATG12 through a thioester bond between Cys-550 and the C-terminal 'Gly-160' of ATG12. Also interacts with ATG3.

It is found in the cytoplasm. The protein resides in the preautophagosomal structure. Functionally, E1-like activating enzyme involved in the 2 ubiquitin-like systems required for cytoplasm to vacuole transport (Cvt) and autophagy. Activates ATG12 for its conjugation with ATG5 and ATG8 for its conjugation with phosphatidylethanolamine. Both systems are needed for the ATG8 association to Cvt vesicles and autophagosomes membranes. Autophagy is essential for maintenance of amino acid levels and protein synthesis under nitrogen starvation. Required for selective autophagic degradation of the nucleus (nucleophagy) as well as for mitophagy which contributes to regulate mitochondrial quantity and quality by eliminating the mitochondria to a basal level to fulfill cellular energy requirements and preventing excess ROS production. Autophagy is required for proper vegetative growth, asexual/sexual reproduction, and full virulence. Autophagy is particularly involved in the biosynthesis of deoxynivalenol (DON), an important virulence determinant. The sequence is that of Ubiquitin-like modifier-activating enzyme ATG7 from Gibberella zeae (strain ATCC MYA-4620 / CBS 123657 / FGSC 9075 / NRRL 31084 / PH-1) (Wheat head blight fungus).